The sequence spans 177 residues: Calcineurin subunit B (177 aa).

EF-hand domains follow at residues 25–60, 62–92, 94–129, and 135–170; these read KEIKKLYKRFKKLDKDGNGTISKDEFLMIPELAVNP, VKRVISIFDENGDGSVNFKEFIAALSVFNAQ, DKQRKLEFAFKVYDIDGDGYISNGELFTVLKMMVGN, and QLQQIVDKTILEADEDGDGKISFEEFAKTLSHQDLE. Ca(2+) is bound by residues D38, D40, N42, T44, E49, D70, N72, D74, S76, E81, D107, D109, D111, Y113, E118, D148, D150, D152, K154, and E159.

This sequence belongs to the calcineurin regulatory subunit family. In terms of assembly, composed of a catalytic subunit (A) and a regulatory subunit (B).

In terms of biological role, regulatory subunit of calcineurin, a calcium-dependent, calmodulin stimulated protein phosphatase. Confers calcium sensitivity. The chain is Calcineurin subunit B (CNB1) from Naegleria gruberi (Amoeba).